The primary structure comprises 406 residues: Enoyl-[acyl-carrier-protein] reductase [NADH] (406 aa).

Residues 48-53 (GASTGF), 74-75 (FE), 111-112 (DA), and 140-141 (IA) each bind NAD(+). Y226 provides a ligand contact to substrate. Y236 functions as the Proton donor in the catalytic mechanism. Residues K245 and 275-277 (LVT) each bind NAD(+).

Belongs to the TER reductase family. In terms of assembly, monomer.

The catalysed reaction is a 2,3-saturated acyl-[ACP] + NAD(+) = a (2E)-enoyl-[ACP] + NADH + H(+). Its pathway is lipid metabolism; fatty acid biosynthesis. Functionally, involved in the final reduction of the elongation cycle of fatty acid synthesis (FAS II). Catalyzes the reduction of a carbon-carbon double bond in an enoyl moiety that is covalently linked to an acyl carrier protein (ACP). This is Enoyl-[acyl-carrier-protein] reductase [NADH] from Coxiella burnetii (strain Dugway 5J108-111).